A 106-amino-acid polypeptide reads, in one-letter code: Starvation responsive small protein A (106 aa).

The chain crosses the membrane as a helical span at residues 15 to 32 (ILLVNAGLISAYGVRIIF).

The protein resides in the cell membrane. Functionally, involved in starvation response and aggregation stage of the life cycle. May be involved in fruiting body morphogenesis and spore formation. The protein is Starvation responsive small protein A of Dictyostelium discoideum (Social amoeba).